Reading from the N-terminus, the 395-residue chain is Elongation factor Tu (395 aa).

One can recognise a tr-type G domain in the interval Lys10–Gln204. Positions Gly19–Thr26 are G1. Gly19–Thr26 contributes to the GTP binding site. Thr26 contributes to the Mg(2+) binding site. Positions Gly60–Ser64 are G2. The interval Asp81 to Gly84 is G3. Residues Asp81–His85 and Asn136–Asp139 contribute to the GTP site. The G4 stretch occupies residues Asn136 to Asp139. The interval Ser174 to Leu176 is G5.

Belongs to the TRAFAC class translation factor GTPase superfamily. Classic translation factor GTPase family. EF-Tu/EF-1A subfamily. As to quaternary structure, monomer.

It localises to the cytoplasm. It carries out the reaction GTP + H2O = GDP + phosphate + H(+). GTP hydrolase that promotes the GTP-dependent binding of aminoacyl-tRNA to the A-site of ribosomes during protein biosynthesis. The sequence is that of Elongation factor Tu from Geobacillus kaustophilus (strain HTA426).